A 65-amino-acid polypeptide reads, in one-letter code: Large ribosomal subunit protein bL32 (65 aa).

This sequence belongs to the bacterial ribosomal protein bL32 family.

This Metamycoplasma arthritidis (strain 158L3-1) (Mycoplasma arthritidis) protein is Large ribosomal subunit protein bL32.